Consider the following 119-residue polypeptide: Large ribosomal subunit protein bL20 (119 aa).

It belongs to the bacterial ribosomal protein bL20 family.

In terms of biological role, binds directly to 23S ribosomal RNA and is necessary for the in vitro assembly process of the 50S ribosomal subunit. It is not involved in the protein synthesizing functions of that subunit. The chain is Large ribosomal subunit protein bL20 from Acidovorax sp. (strain JS42).